A 120-amino-acid polypeptide reads, in one-letter code: Large ribosomal subunit protein uL18 (120 aa).

It belongs to the universal ribosomal protein uL18 family. In terms of assembly, part of the 50S ribosomal subunit; part of the 5S rRNA/L5/L18/L25 subcomplex. Contacts the 5S and 23S rRNAs.

Functionally, this is one of the proteins that bind and probably mediate the attachment of the 5S RNA into the large ribosomal subunit, where it forms part of the central protuberance. This chain is Large ribosomal subunit protein uL18, found in Clostridium novyi (strain NT).